Consider the following 473-residue polypeptide: Inactive FRIGIDA-like protein 2 (473 aa).

2 coiled-coil regions span residues 3–35 (AAES…RSLL) and 306–361 (SLKV…RATK). The segment at 356-384 (RKRATKFNSPANPQQPQEQKVDNKRPRVA) is disordered. Residues 361-373 (KFNSPANPQQPQE) are compositionally biased toward polar residues.

It belongs to the Frigida family. In terms of tissue distribution, expressed at low levels throughout the plant, with slightly higher expression in developing seeds and the highest expression in pollen.

Functionally, inactive FRIGIDA-like 2 protein. The chain is Inactive FRIGIDA-like protein 2 (FRL2) from Arabidopsis thaliana (Mouse-ear cress).